The sequence spans 209 residues: Thymidylate kinase (209 aa).

10-17 (GIDGCGKS) lines the ATP pocket.

It belongs to the thymidylate kinase family.

It carries out the reaction dTMP + ATP = dTDP + ADP. Its function is as follows. Phosphorylation of dTMP to form dTDP in both de novo and salvage pathways of dTTP synthesis. This Synechococcus sp. (strain CC9902) protein is Thymidylate kinase.